The sequence spans 205 residues: High frequency lysogenization protein HflD homolog (205 aa).

This sequence belongs to the HflD family.

It localises to the cytoplasm. It is found in the cell inner membrane. The sequence is that of High frequency lysogenization protein HflD homolog from Aliivibrio fischeri (strain MJ11) (Vibrio fischeri).